The primary structure comprises 316 residues: Ribosomal RNA small subunit methyltransferase H (316 aa).

Residues Gly39–His41, Asp56, Phe82, Asp103, and Gln110 contribute to the S-adenosyl-L-methionine site.

This sequence belongs to the methyltransferase superfamily. RsmH family.

Its subcellular location is the cytoplasm. The enzyme catalyses cytidine(1402) in 16S rRNA + S-adenosyl-L-methionine = N(4)-methylcytidine(1402) in 16S rRNA + S-adenosyl-L-homocysteine + H(+). Functionally, specifically methylates the N4 position of cytidine in position 1402 (C1402) of 16S rRNA. The polypeptide is Ribosomal RNA small subunit methyltransferase H (Methylacidiphilum infernorum (isolate V4) (Methylokorus infernorum (strain V4))).